Consider the following 402-residue polypeptide: Adenylyltransferase and sulfurtransferase MOCS3 (402 aa).

ATP is bound by residues G47, D68, 75–79 (DNLHR), K92, and 136–137 (DN). Positions 178 and 181 each coordinate Zn(2+). The active-site Glycyl thioester intermediate; for adenylyltransferase activity is C195. C253 and C256 together coordinate Zn(2+). One can recognise a Rhodanese domain in the interval 303–400 (AARKQFLLDT…WALKINDEFP (98 aa)). The active-site Cysteine persulfide intermediate; for sulfurtransferase activity is the C359.

In the N-terminal section; belongs to the HesA/MoeB/ThiF family. UBA4 subfamily. Zn(2+) is required as a cofactor.

It localises to the cytoplasm. Its subcellular location is the cytosol. It carries out the reaction [molybdopterin-synthase sulfur-carrier protein]-C-terminal Gly-Gly + ATP + H(+) = [molybdopterin-synthase sulfur-carrier protein]-C-terminal Gly-Gly-AMP + diphosphate. It catalyses the reaction [molybdopterin-synthase sulfur-carrier protein]-C-terminal Gly-Gly-AMP + S-sulfanyl-L-cysteinyl-[cysteine desulfurase] + AH2 = [molybdopterin-synthase sulfur-carrier protein]-C-terminal-Gly-aminoethanethioate + L-cysteinyl-[cysteine desulfurase] + A + AMP + 2 H(+). It participates in tRNA modification; 5-methoxycarbonylmethyl-2-thiouridine-tRNA biosynthesis. The protein operates within cofactor biosynthesis; molybdopterin biosynthesis. In terms of biological role, plays a central role in 2-thiolation of mcm(5)S(2)U at tRNA wobble positions of cytosolic tRNA(Lys), tRNA(Glu) and tRNA(Gln). Also essential during biosynthesis of the molybdenum cofactor. Acts by mediating the C-terminal thiocarboxylation of sulfur carriers URM1 and MOCS2A. Its N-terminus first activates URM1 and MOCS2A as acyl-adenylates (-COAMP), then the persulfide sulfur on the catalytic cysteine is transferred to URM1 and MOCS2A to form thiocarboxylation (-COSH) of their C-terminus. The reaction probably involves hydrogen sulfide that is generated from the persulfide intermediate and that acts as a nucleophile towards URM1 and MOCS2A. Subsequently, a transient disulfide bond is formed. Does not use thiosulfate as sulfur donor; NFS1 probably acting as a sulfur donor for thiocarboxylation reactions. The chain is Adenylyltransferase and sulfurtransferase MOCS3 from Caenorhabditis briggsae.